Consider the following 166-residue polypeptide: 6,7-dimethyl-8-ribityllumazine synthase (166 aa).

5-amino-6-(D-ribitylamino)uracil-binding positions include phenylalanine 24, 58–60 (ALE), and 82–84 (AVV). 87–88 (ET) is a binding site for (2S)-2-hydroxy-3-oxobutyl phosphate. Histidine 90 (proton donor) is an active-site residue. Asparagine 115 contacts 5-amino-6-(D-ribitylamino)uracil. Arginine 129 is a binding site for (2S)-2-hydroxy-3-oxobutyl phosphate.

This sequence belongs to the DMRL synthase family.

The enzyme catalyses (2S)-2-hydroxy-3-oxobutyl phosphate + 5-amino-6-(D-ribitylamino)uracil = 6,7-dimethyl-8-(1-D-ribityl)lumazine + phosphate + 2 H2O + H(+). It functions in the pathway cofactor biosynthesis; riboflavin biosynthesis; riboflavin from 2-hydroxy-3-oxobutyl phosphate and 5-amino-6-(D-ribitylamino)uracil: step 1/2. Its function is as follows. Catalyzes the formation of 6,7-dimethyl-8-ribityllumazine by condensation of 5-amino-6-(D-ribitylamino)uracil with 3,4-dihydroxy-2-butanone 4-phosphate. This is the penultimate step in the biosynthesis of riboflavin. This chain is 6,7-dimethyl-8-ribityllumazine synthase, found in Cupriavidus necator (strain ATCC 17699 / DSM 428 / KCTC 22496 / NCIMB 10442 / H16 / Stanier 337) (Ralstonia eutropha).